Here is a 242-residue protein sequence, read N- to C-terminus: Peptidyl-prolyl cis-trans isomerase FKBP20-2, chloroplastic (242 aa).

A chloroplast-targeting transit peptide spans 1-31 (MVTILSTPLSPRLTFLCETKLSLSRSNRSVC). The transit peptide at 32 to 67 (CSLSEEPKDQCLSRRSLVYVLVASPCLLLPALSSSA) directs the protein to the thylakoid. Residues 138 to 225 (GQQVTFHYIG…VFDVELLSIQ (88 aa)) form the PPIase FKBP-type domain. Residues C227 and C241 are joined by a disulfide bond.

Belongs to the FKBP-type PPIase family. As to quaternary structure, interacts in vitro with LTO1.

Its subcellular location is the plastid. The protein localises to the chloroplast thylakoid lumen. The enzyme catalyses [protein]-peptidylproline (omega=180) = [protein]-peptidylproline (omega=0). PPIases accelerate the folding of proteins. It catalyzes the cis-trans isomerization of proline imidic peptide bonds in oligopeptides. Involved in the accumulation of the PSII complex. In Arabidopsis thaliana (Mouse-ear cress), this protein is Peptidyl-prolyl cis-trans isomerase FKBP20-2, chloroplastic.